The following is a 230-amino-acid chain: MAIGKRLKKAREGVDREKLYPLADAIKMVKERAVSKFDETIEIAINLGVDPRHADQMVRGVVTLPNGTGRTLRVGVFARGAKADEARAAGADVVGAEDLVEKVQGGTIEFDRCIATPDMMPLVGRLGKVLGPRGMMPNPKIGTVTMDITNAVKGAKGGSVEFRVEKAGIVQAGIGKASFGEDKLVENIKALTDAVSKAKPAGAKGTYIQRVAVSSTMGPGVKVEPGSILG.

The protein belongs to the universal ribosomal protein uL1 family. In terms of assembly, part of the 50S ribosomal subunit.

Functionally, binds directly to 23S rRNA. The L1 stalk is quite mobile in the ribosome, and is involved in E site tRNA release. Its function is as follows. Protein L1 is also a translational repressor protein, it controls the translation of the L11 operon by binding to its mRNA. The polypeptide is Large ribosomal subunit protein uL1 (Rhodopseudomonas palustris (strain BisB18)).